The following is a 174-amino-acid chain: Adipose-secreted signaling protein (174 aa).

An N-acetylalanine modification is found at Ala2. Phosphothreonine is present on Thr147.

It belongs to the ADISSP family.

It is found in the secreted. Adipocyte-secreted protein (adipokine) that acts as a key regulator for white adipose tissue (WAT) thermogenesis and glucose homeostasis at least in part through activation of protein kinase A (PKA). In Rattus norvegicus (Rat), this protein is Adipose-secreted signaling protein.